We begin with the raw amino-acid sequence, 54 residues long: Photosystem II reaction center protein K (54 aa).

Residues 1–17 (MFQISLDMISNKINLLG) constitute a propeptide that is removed on maturation. A helical transmembrane segment spans residues 29–49 (IVDVLPIIPILFFLLAFVWQA).

The protein belongs to the PsbK family. In terms of assembly, PSII is composed of 1 copy each of membrane proteins PsbA, PsbB, PsbC, PsbD, PsbE, PsbF, PsbH, PsbI, PsbJ, PsbK, PsbL, PsbM, PsbT, PsbY, PsbZ, Psb30/Ycf12, at least 3 peripheral proteins of the oxygen-evolving complex and a large number of cofactors. It forms dimeric complexes.

It is found in the plastid. The protein localises to the chloroplast thylakoid membrane. Its function is as follows. One of the components of the core complex of photosystem II (PSII). PSII is a light-driven water:plastoquinone oxidoreductase that uses light energy to abstract electrons from H(2)O, generating O(2) and a proton gradient subsequently used for ATP formation. It consists of a core antenna complex that captures photons, and an electron transfer chain that converts photonic excitation into a charge separation. The protein is Photosystem II reaction center protein K of Euglena stellata.